We begin with the raw amino-acid sequence, 289 residues long: ATP synthase gamma chain (289 aa).

This sequence belongs to the ATPase gamma chain family. As to quaternary structure, F-type ATPases have 2 components, CF(1) - the catalytic core - and CF(0) - the membrane proton channel. CF(1) has five subunits: alpha(3), beta(3), gamma(1), delta(1), epsilon(1). CF(0) has three main subunits: a, b and c.

The protein resides in the cell inner membrane. Its function is as follows. Produces ATP from ADP in the presence of a proton gradient across the membrane. The gamma chain is believed to be important in regulating ATPase activity and the flow of protons through the CF(0) complex. The protein is ATP synthase gamma chain of Nitrosococcus oceani (strain ATCC 19707 / BCRC 17464 / JCM 30415 / NCIMB 11848 / C-107).